The primary structure comprises 275 residues: 3-methyl-2-oxobutanoate hydroxymethyltransferase (275 aa).

Residues D49 and D88 each coordinate Mg(2+). 3-methyl-2-oxobutanoate-binding positions include 49 to 50 (DS), D88, and K118. E120 contributes to the Mg(2+) binding site. The Proton acceptor role is filled by E187.

The protein belongs to the PanB family. As to quaternary structure, homodecamer; pentamer of dimers. It depends on Mg(2+) as a cofactor.

It is found in the cytoplasm. The enzyme catalyses 3-methyl-2-oxobutanoate + (6R)-5,10-methylene-5,6,7,8-tetrahydrofolate + H2O = 2-dehydropantoate + (6S)-5,6,7,8-tetrahydrofolate. It participates in cofactor biosynthesis; (R)-pantothenate biosynthesis; (R)-pantoate from 3-methyl-2-oxobutanoate: step 1/2. In terms of biological role, catalyzes the reversible reaction in which hydroxymethyl group from 5,10-methylenetetrahydrofolate is transferred onto alpha-ketoisovalerate to form ketopantoate. The protein is 3-methyl-2-oxobutanoate hydroxymethyltransferase of Hyphomonas neptunium (strain ATCC 15444).